The sequence spans 390 residues: Chaperone protein DnaJ (390 aa).

The region spanning 6–70 (DYYEILGVPR…QKRAQYDQFG (65 aa)) is the J domain. The CR-type zinc-finger motif lies at 146-228 (GSEKEIYVTR…CHGTGKVRRK (83 aa)). Zn(2+) contacts are provided by cysteine 159, cysteine 162, cysteine 176, cysteine 179, cysteine 202, cysteine 205, cysteine 216, and cysteine 219. CXXCXGXG motif repeat units follow at residues 159-166 (CPTCKGKG), 176-183 (CDMCNGTG), 202-209 (CPKCHGTG), and 216-223 (CHECHGTG).

The protein belongs to the DnaJ family. As to quaternary structure, homodimer. Zn(2+) is required as a cofactor.

Its subcellular location is the cytoplasm. Its function is as follows. Participates actively in the response to hyperosmotic and heat shock by preventing the aggregation of stress-denatured proteins and by disaggregating proteins, also in an autonomous, DnaK-independent fashion. Unfolded proteins bind initially to DnaJ; upon interaction with the DnaJ-bound protein, DnaK hydrolyzes its bound ATP, resulting in the formation of a stable complex. GrpE releases ADP from DnaK; ATP binding to DnaK triggers the release of the substrate protein, thus completing the reaction cycle. Several rounds of ATP-dependent interactions between DnaJ, DnaK and GrpE are required for fully efficient folding. Also involved, together with DnaK and GrpE, in the DNA replication of plasmids through activation of initiation proteins. The polypeptide is Chaperone protein DnaJ (Dictyoglomus thermophilum (strain ATCC 35947 / DSM 3960 / H-6-12)).